The following is a 442-amino-acid chain: Histidinol dehydrogenase (442 aa).

Positions 136, 197, and 220 each coordinate NAD(+). Residues serine 243, glutamine 265, and histidine 268 each coordinate substrate. Residues glutamine 265 and histidine 268 each coordinate Zn(2+). Catalysis depends on proton acceptor residues glutamate 333 and histidine 334. Substrate contacts are provided by histidine 334, aspartate 367, glutamate 421, and histidine 426. Aspartate 367 is a binding site for Zn(2+). Position 426 (histidine 426) interacts with Zn(2+).

Belongs to the histidinol dehydrogenase family. The cofactor is Zn(2+).

The catalysed reaction is L-histidinol + 2 NAD(+) + H2O = L-histidine + 2 NADH + 3 H(+). The protein operates within amino-acid biosynthesis; L-histidine biosynthesis; L-histidine from 5-phospho-alpha-D-ribose 1-diphosphate: step 9/9. In terms of biological role, catalyzes the sequential NAD-dependent oxidations of L-histidinol to L-histidinaldehyde and then to L-histidine. This chain is Histidinol dehydrogenase, found in Pseudomonas fluorescens (strain ATCC BAA-477 / NRRL B-23932 / Pf-5).